A 404-amino-acid chain; its full sequence is L-cysteine:1D-myo-inositol 2-amino-2-deoxy-alpha-D-glucopyranoside ligase 1 (404 aa).

Zn(2+) is bound at residue Cys-47. Residues 47–50, Thr-62, and 85–87 contribute to the L-cysteinyl-5'-AMP site; these read CGIT and NIT. Residues 49 to 59 carry the 'HIGH' region motif; sequence ITPYDSTHLGH. A 'ERGGDP' region motif is present at residues 188–193; the sequence is ERGGDP. Trp-228 is a binding site for L-cysteinyl-5'-AMP. Position 232 (Cys-232) interacts with Zn(2+). Residue 250–252 coordinates L-cysteinyl-5'-AMP; sequence GSD. His-257 is a Zn(2+) binding site. Ile-284 provides a ligand contact to L-cysteinyl-5'-AMP. Positions 290 to 294 match the 'KMSKS' region motif; sequence KMSKS.

Belongs to the class-I aminoacyl-tRNA synthetase family. MshC subfamily. Monomer. Requires Zn(2+) as cofactor.

It carries out the reaction 1D-myo-inositol 2-amino-2-deoxy-alpha-D-glucopyranoside + L-cysteine + ATP = 1D-myo-inositol 2-(L-cysteinylamino)-2-deoxy-alpha-D-glucopyranoside + AMP + diphosphate + H(+). Functionally, catalyzes the ATP-dependent condensation of GlcN-Ins and L-cysteine to form L-Cys-GlcN-Ins. This Corynebacterium urealyticum (strain ATCC 43042 / DSM 7109) protein is L-cysteine:1D-myo-inositol 2-amino-2-deoxy-alpha-D-glucopyranoside ligase 1.